Reading from the N-terminus, the 118-residue chain is Myotrophin (118 aa).

ANK repeat units lie at residues 1–30 (MGDK…DVNR), 34–65 (GGRK…NAPD), and 67–98 (HGIT…NRKG).

This sequence belongs to the myotrophin family.

The protein localises to the cytoplasm. It localises to the nucleus. Its subcellular location is the perinuclear region. Regulates NF-kappa-B transcription factor activity. Promotes growth of cardiomyocytes, but not cardiomyocyte proliferation. Promotes cardiac muscle hypertrophy. Plays a role in the regulation of the growth of actin filaments. Inhibits the activity of the F-actin-capping protein complex. The chain is Myotrophin (mtpn) from Danio rerio (Zebrafish).